Here is a 374-residue protein sequence, read N- to C-terminus: Type IV pilus assembly protein PilC (374 aa).

Transmembrane regions (helical) follow at residues 138 to 158 (AMTYPIAVIIVALIVSAILLI), 187 to 207 (EFLQEWWLAVIVGVGAIGFTF), and 347 to 367 (IMAVLGVLVGGLIVAMYLPIF).

This sequence belongs to the GSP F family. Homotetramer. Interacts with PilB.

Its subcellular location is the cell inner membrane. Essential inner membrane component of the type IV pilus (T4P) that plays a role in surface and host cell adhesion, colonization, biofilm maturation, virulence, and twitching, a form of surface-associated motility facilitated by cycles of extension, adhesion, and retraction of T4P fibers. Controls both pilus assembly and disassembly and plays an important role in PilB localization to the complex and ATPase activity. In Pseudomonas aeruginosa (strain ATCC 15692 / DSM 22644 / CIP 104116 / JCM 14847 / LMG 12228 / 1C / PRS 101 / PAO1), this protein is Type IV pilus assembly protein PilC (pilC).